Consider the following 122-residue polypeptide: Large ribosomal subunit protein uL14 (122 aa).

This sequence belongs to the universal ribosomal protein uL14 family. As to quaternary structure, part of the 50S ribosomal subunit. Forms a cluster with proteins L3 and L19. In the 70S ribosome, L14 and L19 interact and together make contacts with the 16S rRNA in bridges B5 and B8.

Binds to 23S rRNA. Forms part of two intersubunit bridges in the 70S ribosome. The polypeptide is Large ribosomal subunit protein uL14 (Streptococcus equi subsp. equi (strain 4047)).